The chain runs to 277 residues: Phosphatidylglycerol--prolipoprotein diacylglyceryl transferase (277 aa).

4 helical membrane passes run I18 to A38, I51 to Y71, I89 to I109, and I116 to G136. R137 serves as a coordination point for a 1,2-diacyl-sn-glycero-3-phospho-(1'-sn-glycerol). 3 helical membrane passes run Q177–I197, G205–M225, and F235–Y255.

It belongs to the Lgt family.

It localises to the cell membrane. It carries out the reaction L-cysteinyl-[prolipoprotein] + a 1,2-diacyl-sn-glycero-3-phospho-(1'-sn-glycerol) = an S-1,2-diacyl-sn-glyceryl-L-cysteinyl-[prolipoprotein] + sn-glycerol 1-phosphate + H(+). Its pathway is protein modification; lipoprotein biosynthesis (diacylglyceryl transfer). Catalyzes the transfer of the diacylglyceryl group from phosphatidylglycerol to the sulfhydryl group of the N-terminal cysteine of a prolipoprotein, the first step in the formation of mature lipoproteins. This chain is Phosphatidylglycerol--prolipoprotein diacylglyceryl transferase, found in Listeria innocua serovar 6a (strain ATCC BAA-680 / CLIP 11262).